A 555-amino-acid chain; its full sequence is MAAACRSEAGLLPSLLCRRPAGAQLLRVALCLLCWVPAAVDAVPELGLWTRTVNDKSGPLVFRKTMFNSTEIKFSVKSFSCSGPVKFTIEWHLKYHTCHNDYPDLEEELSQRHELHADPDVCAYFKNIDCWTTKSENLDCSSDSQAFPSLNNKELTGIRNISSQEGSTDVVARTQKDGFHIFIVSIKTEKTDAVWDLNVSLSMVGPHGYISASDWPLMIFYMVMCIVYILYGVLWLLWSACYWKDILRIQFWIAAVIFLGMLEKAVFYSEYQNINSTGLSTQGLLIFAELISAVKRTLARLLVIIVSLGYGIVKPRLGTVMHRVIGLGLLYLIFAAIEGVMRVIGGSKHLAVVLTDIVLAVIDSIFVWFIFISLAQTMKTLRLRKNTVKFSLYRHFTNTLIFAVLASIVFMVWTTKTFRIAKCQSDWMELWVDDAFWSFLFSVILIVIMFLWRPSANNQRYAFMPLIDDSDDEVEEFMVTSENLTEGIKLRASKTVSNGTAKPTSDNFDEDLKWVEENIPSSFTDVALPVLVDSDEEIMTRSEIAEKMFSSEKIM.

An N-terminal signal peptide occupies residues 1 to 42; it reads MAAACRSEAGLLPSLLCRRPAGAQLLRVALCLLCWVPAAVDA. Topologically, residues 43–216 are lumenal; the sequence is VPELGLWTRT…HGYISASDWP (174 aa). N-linked (GlcNAc...) asparagine glycans are attached at residues N68, N160, and N198. Residues 217–237 traverse the membrane as a helical segment; that stretch reads LMIFYMVMCIVYILYGVLWLL. The Cytoplasmic segment spans residues 238–248; the sequence is WSACYWKDILR. A helical membrane pass occupies residues 249-269; the sequence is IQFWIAAVIFLGMLEKAVFYS. Over 270–300 the chain is Lumenal; it reads EYQNINSTGLSTQGLLIFAELISAVKRTLAR. N275 carries an N-linked (GlcNAc...) asparagine glycan. The helical transmembrane segment at 301 to 321 threads the bilayer; that stretch reads LLVIIVSLGYGIVKPRLGTVM. Topologically, residues 322–323 are cytoplasmic; the sequence is HR. The chain crosses the membrane as a helical span at residues 324 to 344; it reads VIGLGLLYLIFAAIEGVMRVI. Residues 345–351 lie on the Lumenal side of the membrane; that stretch reads GGSKHLA. Residues 352–372 form a helical membrane-spanning segment; the sequence is VVLTDIVLAVIDSIFVWFIFI. The Cytoplasmic segment spans residues 373 to 394; sequence SLAQTMKTLRLRKNTVKFSLYR. Residues 395 to 415 traverse the membrane as a helical segment; the sequence is HFTNTLIFAVLASIVFMVWTT. At 416–429 the chain is on the lumenal side; the sequence is KTFRIAKCQSDWME. A helical transmembrane segment spans residues 430–450; sequence LWVDDAFWSFLFSVILIVIMF. Over 451-555 the chain is Cytoplasmic; it reads LWRPSANNQR…EKMFSSEKIM (105 aa). Residues S470, S497, and S534 each carry the phosphoserine modification.

The protein belongs to the LU7TM family. TMEM87 subfamily.

The protein localises to the golgi apparatus membrane. Its function is as follows. May be involved in retrograde transport from endosomes to the trans-Golgi network (TGN). This is Transmembrane protein 87B from Mus musculus (Mouse).